Here is a 500-residue protein sequence, read N- to C-terminus: Cytochrome P450 2C11 (500 aa).

Residue Cys435 participates in heme binding.

Belongs to the cytochrome P450 family. The cofactor is heme. As to expression, liver and kidney; male-specific.

It is found in the endoplasmic reticulum membrane. The protein resides in the microsome membrane. It catalyses the reaction an organic molecule + reduced [NADPH--hemoprotein reductase] + O2 = an alcohol + oxidized [NADPH--hemoprotein reductase] + H2O + H(+). The enzyme catalyses testosterone + reduced [NADPH--hemoprotein reductase] + O2 = 2alpha,17beta-dihydroxyandrost-4-en-3-one + oxidized [NADPH--hemoprotein reductase] + H2O + H(+). It carries out the reaction testosterone + reduced [NADPH--hemoprotein reductase] + O2 = 16alpha,17beta-dihydroxyandrost-4-en-3-one + oxidized [NADPH--hemoprotein reductase] + H2O + H(+). The catalysed reaction is (5Z,8Z,11Z,14Z)-eicosatetraenoate + reduced [NADPH--hemoprotein reductase] + O2 = (8R,9S)-epoxy-(5Z,11Z,14Z)-eicosatrienoate + oxidized [NADPH--hemoprotein reductase] + H2O + H(+). It catalyses the reaction (5Z,8Z,11Z,14Z)-eicosatetraenoate + reduced [NADPH--hemoprotein reductase] + O2 = (8S,9R)-epoxy-(5Z,11Z,14Z)-eicosatrienoate + oxidized [NADPH--hemoprotein reductase] + H2O + H(+). The enzyme catalyses (5Z,8Z,11Z,14Z)-eicosatetraenoate + reduced [NADPH--hemoprotein reductase] + O2 = (11R,12S)-epoxy-(5Z,8Z,14Z)-eicosatrienoate + oxidized [NADPH--hemoprotein reductase] + H2O + H(+). It carries out the reaction (5Z,8Z,11Z,14Z)-eicosatetraenoate + reduced [NADPH--hemoprotein reductase] + O2 = (11S,12R)-epoxy-(5Z,8Z,14Z)-eicosatrienoate + oxidized [NADPH--hemoprotein reductase] + H2O + H(+). The catalysed reaction is (5Z,8Z,11Z,14Z)-eicosatetraenoate + reduced [NADPH--hemoprotein reductase] + O2 = (14R,15S)-epoxy-(5Z,8Z,11Z)-eicosatrienoate + oxidized [NADPH--hemoprotein reductase] + H2O + H(+). It catalyses the reaction (5Z,8Z,11Z,14Z)-eicosatetraenoate + reduced [NADPH--hemoprotein reductase] + O2 = (14S,15R)-epoxy-(5Z,8Z,11Z)-eicosatrienoate + oxidized [NADPH--hemoprotein reductase] + H2O + H(+). The enzyme catalyses (5Z,8Z,11Z,14Z,17Z)-eicosapentaenoate + reduced [NADPH--hemoprotein reductase] + O2 = 8,9-epoxy-(5Z,11Z,14Z,17Z)-eicosatetraenoate + oxidized [NADPH--hemoprotein reductase] + H2O + H(+). It carries out the reaction (5Z,8Z,11Z,14Z,17Z)-eicosapentaenoate + reduced [NADPH--hemoprotein reductase] + O2 = 11,12-epoxy-(5Z,8Z,14Z,17Z)-eicosatetraenoate + oxidized [NADPH--hemoprotein reductase] + H2O + H(+). The catalysed reaction is (5Z,8Z,11Z,14Z,17Z)-eicosapentaenoate + reduced [NADPH--hemoprotein reductase] + O2 = 14,15-epoxy-(5Z,8Z,11Z,17Z)-eicosatetraenoate + oxidized [NADPH--hemoprotein reductase] + H2O + H(+). It catalyses the reaction (5Z,8Z,11Z,14Z,17Z)-eicosapentaenoate + reduced [NADPH--hemoprotein reductase] + O2 = (17S,18R)-epoxy-(5Z,8Z,11Z,14Z)-eicosatetraenoate + oxidized [NADPH--hemoprotein reductase] + H2O + H(+). The enzyme catalyses (5Z,8Z,11Z,14Z,17Z)-eicosapentaenoate + reduced [NADPH--hemoprotein reductase] + O2 = (17R,18S)-epoxy-(5Z,8Z,11Z,14Z)-eicosatetraenoate + oxidized [NADPH--hemoprotein reductase] + H2O + H(+). Its pathway is lipid metabolism; arachidonate metabolism. It functions in the pathway steroid metabolism. Its function is as follows. A cytochrome P450 monooxygenase involved in the metabolism of steroid hormones and fatty acids. Catalyzes the hydroxylation of carbon-hydrogen bonds. Metabolizes testosterone to 2alpha- and 16alpha-hydroxytestosterone. Catalyzes the epoxidation of double bonds of polyunsaturated fatty acids (PUFAs). Converts arachidonic acid (ARA, C20:4(n-6)) primarily to epoxyeicosatrienoic acid (EET) regioisomers, 8,9-, 11,12-, and 14,15-EET, with both R,S and S,R stereochemistry. Preferentially produces 11R,12S-EET enantiomer. To a lesser extent, catalyzes the hydroxylation of arachidonic acid producing hydroxyeicosatetraenoates (HETEs). Metabolizes eicosapentaenoic acid (EPA, C20:5(n-3)) to epoxyeicosatetraenoic acid (EETeTr) regioisomers, 8,9-, 11,12-, 14,15-, and 17,18-EETeTr, preferentially producing 17R,18S-EETeTr enantiomer. Mechanistically, uses molecular oxygen inserting one oxygen atom into a substrate, and reducing the second into a water molecule, with two electrons provided by NADPH via cytochrome P450 reductase (NADPH--hemoprotein reductase). The sequence is that of Cytochrome P450 2C11 (Cyp2c11) from Rattus norvegicus (Rat).